Reading from the N-terminus, the 356-residue chain is 5-formaminoimidazole-4-carboxamide-1-(beta)-D-ribofuranosyl 5'-monophosphate synthetase (356 aa).

The 5-amino-1-(5-phospho-beta-D-ribosyl)imidazole-4-carboxamide site is built by His-27 and Ser-94. Residues 116–333 (RCLAWESDRE…YSDLIEKGLS (218 aa)) form the ATP-grasp domain. Residues 145-196 (AELI…TRYY) and Glu-226 contribute to the ATP site. Asn-255 is a binding site for 5-amino-1-(5-phospho-beta-D-ribosyl)imidazole-4-carboxamide. 2 residues coordinate Mg(2+): Glu-293 and Glu-306.

It belongs to the phosphohexose mutase family. Mg(2+) serves as cofactor. The cofactor is Mn(2+).

The enzyme catalyses 5-amino-1-(5-phospho-beta-D-ribosyl)imidazole-4-carboxamide + formate + ATP = 5-formamido-1-(5-phospho-D-ribosyl)imidazole-4-carboxamide + ADP + phosphate. It participates in purine metabolism; IMP biosynthesis via de novo pathway; 5-formamido-1-(5-phospho-D-ribosyl)imidazole-4-carboxamide from 5-amino-1-(5-phospho-D-ribosyl)imidazole-4-carboxamide (formate route): step 1/1. In terms of biological role, catalyzes the ATP- and formate-dependent formylation of 5-aminoimidazole-4-carboxamide-1-beta-d-ribofuranosyl 5'-monophosphate (AICAR) to 5-formaminoimidazole-4-carboxamide-1-beta-d-ribofuranosyl 5'-monophosphate (FAICAR) in the absence of folates. This is 5-formaminoimidazole-4-carboxamide-1-(beta)-D-ribofuranosyl 5'-monophosphate synthetase from Methanothrix thermoacetophila (strain DSM 6194 / JCM 14653 / NBRC 101360 / PT) (Methanosaeta thermophila).